We begin with the raw amino-acid sequence, 303 residues long: N-acetyl-D-glucosamine kinase (303 aa).

ATP is bound by residues Gly4–Lys11 and Gly133–Phe140. 4 residues coordinate Zn(2+): His157, Cys177, Cys179, and Cys184.

Belongs to the ROK (NagC/XylR) family. NagK subfamily.

The enzyme catalyses N-acetyl-D-glucosamine + ATP = N-acetyl-D-glucosamine 6-phosphate + ADP + H(+). Its pathway is cell wall biogenesis; peptidoglycan recycling. In terms of biological role, catalyzes the phosphorylation of N-acetyl-D-glucosamine (GlcNAc) derived from cell-wall degradation, yielding GlcNAc-6-P. This is N-acetyl-D-glucosamine kinase from Escherichia fergusonii (strain ATCC 35469 / DSM 13698 / CCUG 18766 / IAM 14443 / JCM 21226 / LMG 7866 / NBRC 102419 / NCTC 12128 / CDC 0568-73).